A 97-amino-acid chain; its full sequence is HssA/B-like protein 38 (97 aa).

Residues 1–29 (MTLFSSISSISNPMTSSKSSISSFGSGTS) are disordered.

Belongs to the hssA/B family.

The chain is HssA/B-like protein 38 (hssl38) from Dictyostelium discoideum (Social amoeba).